Here is a 548-residue protein sequence, read N- to C-terminus: CTP synthase (548 aa).

Residues 1 to 265 (MTRYIFVTGG…DDIICDKLRI (265 aa)) form an amidoligase domain region. Position 13 (Ser13) interacts with CTP. Ser13 contributes to the UTP binding site. Residues 14–19 (SLGKGI) and Asp71 contribute to the ATP site. Residues Asp71 and Glu139 each coordinate Mg(2+). CTP-binding positions include 146-148 (DIE), 186-191 (KTKPTQ), and Lys222. Residues 186–191 (KTKPTQ) and Lys222 each bind UTP. One can recognise a Glutamine amidotransferase type-1 domain in the interval 290–541 (NIAMVGKYME…VNAALAYKAA (252 aa)). Gly351 provides a ligand contact to L-glutamine. Catalysis depends on Cys378, which acts as the Nucleophile; for glutamine hydrolysis. L-glutamine contacts are provided by residues 379-382 (LGMQ), Glu402, and Arg469. Catalysis depends on residues His514 and Glu516.

Belongs to the CTP synthase family. In terms of assembly, homotetramer.

It carries out the reaction UTP + L-glutamine + ATP + H2O = CTP + L-glutamate + ADP + phosphate + 2 H(+). The catalysed reaction is L-glutamine + H2O = L-glutamate + NH4(+). It catalyses the reaction UTP + NH4(+) + ATP = CTP + ADP + phosphate + 2 H(+). It functions in the pathway pyrimidine metabolism; CTP biosynthesis via de novo pathway; CTP from UDP: step 2/2. Allosterically activated by GTP, when glutamine is the substrate; GTP has no effect on the reaction when ammonia is the substrate. The allosteric effector GTP functions by stabilizing the protein conformation that binds the tetrahedral intermediate(s) formed during glutamine hydrolysis. Inhibited by the product CTP, via allosteric rather than competitive inhibition. Its function is as follows. Catalyzes the ATP-dependent amination of UTP to CTP with either L-glutamine or ammonia as the source of nitrogen. Regulates intracellular CTP levels through interactions with the four ribonucleotide triphosphates. The sequence is that of CTP synthase from Chromohalobacter salexigens (strain ATCC BAA-138 / DSM 3043 / CIP 106854 / NCIMB 13768 / 1H11).